A 403-amino-acid polypeptide reads, in one-letter code: D-mannonate dehydratase Caul1427 (403 aa).

Residues Asn-38 and His-123 each contribute to the substrate site. Tyr-160 acts as the Proton donor/acceptor in catalysis. Asp-211 is a binding site for Mg(2+). His-213 (proton donor/acceptor) is an active-site residue. Residues Glu-237 and Glu-263 each contribute to the Mg(2+) site. Substrate-binding residues include Glu-263, Arg-284, His-313, Asp-317, and Glu-340.

Belongs to the mandelate racemase/muconate lactonizing enzyme family. GalD subfamily. Mg(2+) serves as cofactor.

It carries out the reaction D-mannonate = 2-dehydro-3-deoxy-D-gluconate + H2O. Its pathway is carbohydrate metabolism; pentose and glucuronate interconversion. Catalyzes the dehydration of D-mannonate. Has no detectable activity with a panel of 70 other acid sugars (in vitro). The chain is D-mannonate dehydratase Caul1427 from Caulobacter sp. (strain K31).